The sequence spans 152 residues: Deoxyuridine 5'-triphosphate nucleotidohydrolase (152 aa).

Residues 72 to 74 (RSG), Asn85, and 89 to 91 (TID) contribute to the substrate site.

It belongs to the dUTPase family. Mg(2+) serves as cofactor.

The enzyme catalyses dUTP + H2O = dUMP + diphosphate + H(+). Its pathway is pyrimidine metabolism; dUMP biosynthesis; dUMP from dCTP (dUTP route): step 2/2. Its function is as follows. This enzyme is involved in nucleotide metabolism: it produces dUMP, the immediate precursor of thymidine nucleotides and it decreases the intracellular concentration of dUTP so that uracil cannot be incorporated into DNA. The polypeptide is Deoxyuridine 5'-triphosphate nucleotidohydrolase (Rhodopseudomonas palustris (strain BisB5)).